Here is a 511-residue protein sequence, read N- to C-terminus: Ribonuclease E/G-like protein (511 aa).

The S1 motif domain occupies 35–117 (SDIYLGTVDK…LTANITLSGR (83 aa)). Mg(2+) is bound by residues aspartate 296 and aspartate 339.

This sequence belongs to the RNase E/G family. Requires Mg(2+) as cofactor.

The protein resides in the plastid. It is found in the chloroplast stroma. Functionally, involved in intercistronic processing of primary transcripts from chloroplast operons. The endonucleolytic activity of the enzyme depends on the number of phosphates at the 5' end, is inhibited by structured RNA, and preferentially cleaves A/U-rich sequences. This Porphyra purpurea (Red seaweed) protein is Ribonuclease E/G-like protein (rne).